The primary structure comprises 1000 residues: Isoleucine--tRNA ligase, mitochondrial (1000 aa).

The transit peptide at 1–27 (MLGAWRAAPRLRLRARFGVASVWARSA) directs the protein to the mitochondrion. Positions 102-112 (PYANGDPHVGH) match the 'HIGH' region motif. Residues K649 and K652 each contribute to the ATP site. Positions 649-653 (KMSKS) match the 'KMSKS' region motif.

Belongs to the class-I aminoacyl-tRNA synthetase family.

It is found in the mitochondrion matrix. The catalysed reaction is tRNA(Ile) + L-isoleucine + ATP = L-isoleucyl-tRNA(Ile) + AMP + diphosphate. Aminoacyl-tRNA synthetase that catalyzes the specific attachment of isoleucine to its cognate tRNA (tRNA(Ile)). The polypeptide is Isoleucine--tRNA ligase, mitochondrial (IARS2) (Gallus gallus (Chicken)).